The following is a 181-amino-acid chain: Oligoribonuclease (181 aa).

Residues Leu-8 to Leu-171 enclose the Exonuclease domain. Tyr-129 is a catalytic residue.

Belongs to the oligoribonuclease family.

The protein localises to the cytoplasm. In terms of biological role, 3'-to-5' exoribonuclease specific for small oligoribonucleotides. This is Oligoribonuclease from Serratia proteamaculans (strain 568).